Reading from the N-terminus, the 176-residue chain is B9 domain-containing protein 2 (176 aa).

One can recognise a C2 B9-type domain in the interval 2-118; it reads AEVHIIGQII…LSPTWRPLGT (117 aa).

Belongs to the B9D family. In terms of assembly, part of the tectonic-like complex (also named B9 complex).

Its subcellular location is the cytoplasm. It localises to the cytoskeleton. It is found in the cilium basal body. The protein localises to the cilium axoneme. In terms of biological role, component of the tectonic-like complex, a complex localized at the transition zone of primary cilia and acting as a barrier that prevents diffusion of transmembrane proteins between the cilia and plasma membranes. This chain is B9 domain-containing protein 2 (b9d2), found in Xenopus laevis (African clawed frog).